The chain runs to 136 residues: Small ribosomal subunit protein uS8c (136 aa).

This sequence belongs to the universal ribosomal protein uS8 family. In terms of assembly, part of the 30S ribosomal subunit.

It is found in the plastid. Its subcellular location is the chloroplast. Its function is as follows. One of the primary rRNA binding proteins, it binds directly to 16S rRNA central domain where it helps coordinate assembly of the platform of the 30S subunit. The polypeptide is Small ribosomal subunit protein uS8c (rps8) (Tetradesmus obliquus (Green alga)).